The chain runs to 768 residues: WD repeat-containing protein 20 homolog (768 aa).

The segment at 103 to 122 (ESPEAVAPTSSTYEHHKNEP) is disordered. 4 WD repeats span residues 224-264 (IEKT…ASSN), 302-342 (IGEG…LLAV), 345-384 (SYFG…VVCR), and 454-497 (CSLA…LNQG). The tract at residues 531–608 (VSPGGAGVNA…VNSESSKKQN (78 aa)) is disordered. Over residues 539 to 553 (NASSDSQSITNNHTT) the composition is skewed to polar residues. A compositionally biased stretch (low complexity) spans 570–582 (FSKFTSGSSSATS). The span at 595–608 (NGASVNSESSKKQN) shows a compositional bias: polar residues. A WD 5 repeat occupies 646-683 (VSHDRLTVLEFREDCVVTACQEGYICTWGRPGRYQPKR). The tract at residues 684-749 (DCINSPGTAS…PNITSPSYRV (66 aa)) is disordered. Polar residues predominate over residues 688–712 (SPGTASPESGQKPSGSTSAMTSSYG). Low complexity predominate over residues 724-733 (SRSSSTYSNS). Over residues 734–749 (EQQLRSPNITSPSYRV) the composition is skewed to polar residues.

Interacts with usp-46; the interaction increases the catalytic activity of usp-46 in the presence of wdr-48. In terms of tissue distribution, expressed in several neurons in the head and tail.

In terms of biological role, together with wdr-48, binds to and stimulates the activity of the deubiquitinating enzyme usp-46, leading to deubiquitination and stabilization of the glr-1 glutamate receptor. The sequence is that of WD repeat-containing protein 20 homolog from Caenorhabditis elegans.